The primary structure comprises 367 residues: Glutamate 5-kinase (367 aa).

Lys-10 is an ATP binding site. Ser-50, Asp-137, and Asn-149 together coordinate substrate. Residues Thr-169 to Asp-170 and Thr-211 to Lys-217 each bind ATP. Residues Ala-275–Glu-353 form the PUA domain.

The protein belongs to the glutamate 5-kinase family.

It is found in the cytoplasm. The catalysed reaction is L-glutamate + ATP = L-glutamyl 5-phosphate + ADP. It functions in the pathway amino-acid biosynthesis; L-proline biosynthesis; L-glutamate 5-semialdehyde from L-glutamate: step 1/2. Catalyzes the transfer of a phosphate group to glutamate to form L-glutamate 5-phosphate. This is Glutamate 5-kinase from Yersinia enterocolitica serotype O:8 / biotype 1B (strain NCTC 13174 / 8081).